Here is a 228-residue protein sequence, read N- to C-terminus: Cytidylate kinase (228 aa).

Residue 10 to 18 (GPSGSGKGT) participates in ATP binding.

Belongs to the cytidylate kinase family. Type 1 subfamily.

It is found in the cytoplasm. The enzyme catalyses CMP + ATP = CDP + ADP. It catalyses the reaction dCMP + ATP = dCDP + ADP. The protein is Cytidylate kinase of Acinetobacter baumannii (strain ACICU).